The sequence spans 336 residues: Cytoskeleton protein RodZ (336 aa).

Over 1–111 (MNTEATHDQN…LGKRRKKRDG (111 aa)) the chain is Cytoplasmic. The region spanning 19–71 (LRNAREQLGLSQQAVAERLCLKVSTVRDIEEDKAPADLASTFLRGYIRSYARL) is the HTH cro/C1-type domain. Positions 30–49 (QQAVAERLCLKVSTVRDIEE) form a DNA-binding region, H-T-H motif. The chain crosses the membrane as a helical; Signal-anchor for type II membrane protein span at residues 112 to 132 (WLMTFTWLVLFVVIGLSGAWW). Residues 133-336 (WQDHKAQQEE…TLNAEQSPAQ (204 aa)) lie on the Periplasmic side of the membrane. The segment covering 148-164 (DQSSAELNNNQSQSVPL) has biased composition (polar residues). The disordered stretch occupies residues 148–248 (DQSSAELNNN…TDQAGVTTPA (101 aa)). The span at 165–201 (DTSTTTDQAMATTPTSPVDTTATNTQTPAATTAPSPT) shows a compositional bias: low complexity. Residues 202–217 (VDSQQNAVVPPSQANV) show a composition bias toward polar residues. Positions 219–236 (TAATPAPAATTMPDGAAP) are enriched in low complexity.

This sequence belongs to the RodZ family.

The protein resides in the cell inner membrane. In terms of biological role, cytoskeletal protein that is involved in cell-shape control through regulation of the length of the long axis. This is Cytoskeleton protein RodZ from Escherichia coli (strain SMS-3-5 / SECEC).